A 332-amino-acid polypeptide reads, in one-letter code: Phospho-N-acetylmuramoyl-pentapeptide-transferase (332 aa).

10 helical membrane-spanning segments follow: residues 3–23, 52–72, 74–94, 115–135, 140–160, 172–192, 197–217, 223–243, 248–268, and 311–331; these read FALM…PRFI, MGGT…ATAF, LLTG…VVGF, LALQ…GAGG, VFGH…FWLV, IDGL…VIAF, FDIL…FVYN, IFMG…ISIA, WTLL…MLQV, and VDFF…AILY.

The protein belongs to the glycosyltransferase 4 family. MraY subfamily. Mg(2+) is required as a cofactor.

The protein resides in the cell membrane. It carries out the reaction UDP-N-acetyl-alpha-D-muramoyl-L-alanyl-gamma-D-glutamyl-L-lysyl-D-alanyl-D-alanine + di-trans,octa-cis-undecaprenyl phosphate = Mur2Ac(oyl-L-Ala-gamma-D-Glu-L-Lys-D-Ala-D-Ala)-di-trans,octa-cis-undecaprenyl diphosphate + UMP. Its pathway is cell wall biogenesis; peptidoglycan biosynthesis. Its function is as follows. Catalyzes the initial step of the lipid cycle reactions in the biosynthesis of the cell wall peptidoglycan: transfers peptidoglycan precursor phospho-MurNAc-pentapeptide from UDP-MurNAc-pentapeptide onto the lipid carrier undecaprenyl phosphate, yielding undecaprenyl-pyrophosphoryl-MurNAc-pentapeptide, known as lipid I. The protein is Phospho-N-acetylmuramoyl-pentapeptide-transferase of Streptococcus suis (strain 98HAH33).